The primary structure comprises 273 residues: MSYLLDPSRKTITIPKLQAMRDAGEKIAMLTAYDSSFAALLDYCGVEMILVGDSLGNVMQGQQTTLPVTLEQMAYHTECAARGNQTALLLTDLPFGTYPTPEAAFASAVTLMKAGAQMVKLEGGDWLAPIVKFLVERSIPVCAHIGLTPQSVHALGGFKVQGKTDAGAAQLRRDALALQAAGAQVVLMEAVPAALAGEITQSLAVPTIGIGAGADCSGQVLVLQDMLNIYPGRKAKFVRNFMDGQPSIEAAVRAYVAAVKDGSFPAAEHTFSA.

Mg(2+)-binding residues include aspartate 53 and aspartate 92. 3-methyl-2-oxobutanoate contacts are provided by residues 53–54 (DS), aspartate 92, and lysine 120. Glutamate 122 provides a ligand contact to Mg(2+). The active-site Proton acceptor is the glutamate 189.

This sequence belongs to the PanB family. Homodecamer; pentamer of dimers. The cofactor is Mg(2+).

It is found in the cytoplasm. It carries out the reaction 3-methyl-2-oxobutanoate + (6R)-5,10-methylene-5,6,7,8-tetrahydrofolate + H2O = 2-dehydropantoate + (6S)-5,6,7,8-tetrahydrofolate. The protein operates within cofactor biosynthesis; (R)-pantothenate biosynthesis; (R)-pantoate from 3-methyl-2-oxobutanoate: step 1/2. Catalyzes the reversible reaction in which hydroxymethyl group from 5,10-methylenetetrahydrofolate is transferred onto alpha-ketoisovalerate to form ketopantoate. This chain is 3-methyl-2-oxobutanoate hydroxymethyltransferase, found in Cupriavidus taiwanensis (strain DSM 17343 / BCRC 17206 / CCUG 44338 / CIP 107171 / LMG 19424 / R1) (Ralstonia taiwanensis (strain LMG 19424)).